The primary structure comprises 580 residues: MTPTQNEIHPKHSYSPIRKHGLEVPETEIALDDSPSGPNEPFRIYRTRGPETDPTLGLPRLRTPWITARGDVTEYTGRERLLIDDGRSAMRRGQASAEWKGQKPAPLKALPGKRVTQMAYARAGEITREMEFVALREHVDPEFVRSEVARGRAIIPNNVNHPESEPMIIGRKFLTKINANIGNSAVTSSIEEEVSKLQWATRWGADTVMDLSTGDDIHTTREWIIRNSPVPIGTVPIYQALEKVNGVAADLSWEVFRDTVIEQCEQGVDYMTIHAGVLLAYIPLTTRRVTGIVSRGGSIMAGWCLAHHRESFLFEHFDELCEIFAQYDVAFSLGDGLRPGSLADANDAAQFAELKTIGELTQRAWEYDVQVMVEGPGHVPLNMIQENNELEQKWAADAPFYTLGPLVTDIAPGYDHITSAIGAAHIAMGGTAMLCYVTPKEHLGLPNRNDVKTGVITYKLAAHAADVAKGHPGARAWDDAMSKARFEFRWNDQFALSLDPDTAIAYHDETLPAEPAKTAHFCSMCGPKFCSMRISQDIRDMFGEQIAELGMPGVGASDSTEGMKEKSREFVAGGGEVYRE.

The segment at 1–58 (MTPTQNEIHPKHSYSPIRKHGLEVPETEIALDDSPSGPNEPFRIYRTRGPETDPTLGL) is disordered. Substrate is bound by residues Asn180, Met209, Tyr238, His274, 294-296 (SRG), 335-338 (DGLR), and Glu374. His378 lines the Zn(2+) pocket. Tyr401 contributes to the substrate binding site. Position 442 (His442) interacts with Zn(2+). [4Fe-4S] cluster-binding residues include Cys522, Cys525, and Cys530. A disordered region spans residues 554–580 (VGASDSTEGMKEKSREFVAGGGEVYRE).

Belongs to the ThiC family. The cofactor is [4Fe-4S] cluster.

It catalyses the reaction 5-amino-1-(5-phospho-beta-D-ribosyl)imidazole + S-adenosyl-L-methionine = 4-amino-2-methyl-5-(phosphooxymethyl)pyrimidine + CO + 5'-deoxyadenosine + formate + L-methionine + 3 H(+). The protein operates within cofactor biosynthesis; thiamine diphosphate biosynthesis. In terms of biological role, catalyzes the synthesis of the hydroxymethylpyrimidine phosphate (HMP-P) moiety of thiamine from aminoimidazole ribotide (AIR) in a radical S-adenosyl-L-methionine (SAM)-dependent reaction. The sequence is that of Phosphomethylpyrimidine synthase from Corynebacterium efficiens (strain DSM 44549 / YS-314 / AJ 12310 / JCM 11189 / NBRC 100395).